Here is a 352-residue protein sequence, read N- to C-terminus: Quinolinate synthase (352 aa).

Iminosuccinate is bound by residues His55 and Ser72. Cys117 contributes to the [4Fe-4S] cluster binding site. Iminosuccinate contacts are provided by residues Tyr143–Asn145 and Ser160. Cys204 provides a ligand contact to [4Fe-4S] cluster. Iminosuccinate contacts are provided by residues His230–Glu232 and Thr258. Cys303 provides a ligand contact to [4Fe-4S] cluster.

Belongs to the quinolinate synthase family. Type 2 subfamily. The cofactor is [4Fe-4S] cluster.

Its subcellular location is the cytoplasm. The enzyme catalyses iminosuccinate + dihydroxyacetone phosphate = quinolinate + phosphate + 2 H2O + H(+). It functions in the pathway cofactor biosynthesis; NAD(+) biosynthesis; quinolinate from iminoaspartate: step 1/1. Catalyzes the condensation of iminoaspartate with dihydroxyacetone phosphate to form quinolinate. The protein is Quinolinate synthase of Mycobacterium leprae (strain Br4923).